The following is a 561-amino-acid chain: 2-succinyl-5-enolpyruvyl-6-hydroxy-3-cyclohexene-1-carboxylate synthase (561 aa).

Belongs to the TPP enzyme family. MenD subfamily. In terms of assembly, homodimer. The cofactor is Mg(2+). Mn(2+) serves as cofactor. Requires thiamine diphosphate as cofactor.

It catalyses the reaction isochorismate + 2-oxoglutarate + H(+) = 5-enolpyruvoyl-6-hydroxy-2-succinyl-cyclohex-3-ene-1-carboxylate + CO2. It participates in quinol/quinone metabolism; 1,4-dihydroxy-2-naphthoate biosynthesis; 1,4-dihydroxy-2-naphthoate from chorismate: step 2/7. Its pathway is quinol/quinone metabolism; menaquinone biosynthesis. Functionally, catalyzes the thiamine diphosphate-dependent decarboxylation of 2-oxoglutarate and the subsequent addition of the resulting succinic semialdehyde-thiamine pyrophosphate anion to isochorismate to yield 2-succinyl-5-enolpyruvyl-6-hydroxy-3-cyclohexene-1-carboxylate (SEPHCHC). This Proteus mirabilis (strain HI4320) protein is 2-succinyl-5-enolpyruvyl-6-hydroxy-3-cyclohexene-1-carboxylate synthase.